The following is a 254-amino-acid chain: Ubiquinone biosynthesis O-methyltransferase (254 aa).

4 residues coordinate S-adenosyl-L-methionine: Arg47, Gly76, Asp97, and Leu141.

It belongs to the methyltransferase superfamily. UbiG/COQ3 family.

It catalyses the reaction a 3-demethylubiquinol + S-adenosyl-L-methionine = a ubiquinol + S-adenosyl-L-homocysteine + H(+). The enzyme catalyses a 3-(all-trans-polyprenyl)benzene-1,2-diol + S-adenosyl-L-methionine = a 2-methoxy-6-(all-trans-polyprenyl)phenol + S-adenosyl-L-homocysteine + H(+). Its pathway is cofactor biosynthesis; ubiquinone biosynthesis. In terms of biological role, O-methyltransferase that catalyzes the 2 O-methylation steps in the ubiquinone biosynthetic pathway. The sequence is that of Ubiquinone biosynthesis O-methyltransferase from Maricaulis maris (strain MCS10) (Caulobacter maris).